The following is a 115-amino-acid chain: Large ribosomal subunit protein bL19 (115 aa).

The protein belongs to the bacterial ribosomal protein bL19 family.

This protein is located at the 30S-50S ribosomal subunit interface and may play a role in the structure and function of the aminoacyl-tRNA binding site. The sequence is that of Large ribosomal subunit protein bL19 from Desulforapulum autotrophicum (strain ATCC 43914 / DSM 3382 / VKM B-1955 / HRM2) (Desulfobacterium autotrophicum).